A 484-amino-acid chain; its full sequence is Catalase (484 aa).

Met-53 is subject to Methionine sulfone. Residues His-54 and Asn-127 contribute to the active site. Position 337 (Tyr-337) interacts with heme.

Homotetramer. Requires heme as cofactor. NADP(+) serves as cofactor.

The protein localises to the cytoplasm. The enzyme catalyses 2 H2O2 = O2 + 2 H2O. Decomposes hydrogen peroxide into water and oxygen; serves to protect cells from the toxic effects of hydrogen peroxide. In Proteus mirabilis, this protein is Catalase (katA).